The chain runs to 259 residues: Phosphatidate cytidylyltransferase (259 aa).

7 helical membrane passes run 31–51 (LVIFLPKSLFLLVILFLCFAI), 69–89 (PLVLLTYYFADPLVFPLIGLL), 103–123 (FFKSTFLLFYPALFLVYLIKI), 129–149 (YYLLIFIFGIWINDVFAYYIG), 170–190 (FLGGVLFGSLFFALTLPYGIL), 193–213 (FLLGTFVLTVGVAGDYFKSFI), and 236–256 (FDALVFSAPVFYLIMCAGELN).

This sequence belongs to the CDS family.

It is found in the cell membrane. The catalysed reaction is a 1,2-diacyl-sn-glycero-3-phosphate + CTP + H(+) = a CDP-1,2-diacyl-sn-glycerol + diphosphate. Its pathway is phospholipid metabolism; CDP-diacylglycerol biosynthesis; CDP-diacylglycerol from sn-glycerol 3-phosphate: step 3/3. This Aquifex aeolicus (strain VF5) protein is Phosphatidate cytidylyltransferase (cdsA).